The following is a 188-amino-acid chain: Elongation factor P (188 aa).

Belongs to the elongation factor P family.

The protein localises to the cytoplasm. The protein operates within protein biosynthesis; polypeptide chain elongation. Involved in peptide bond synthesis. Stimulates efficient translation and peptide-bond synthesis on native or reconstituted 70S ribosomes in vitro. Probably functions indirectly by altering the affinity of the ribosome for aminoacyl-tRNA, thus increasing their reactivity as acceptors for peptidyl transferase. This chain is Elongation factor P, found in Paramagnetospirillum magneticum (strain ATCC 700264 / AMB-1) (Magnetospirillum magneticum).